Consider the following 184-residue polypeptide: Large ribosomal subunit protein uL6 (184 aa).

It belongs to the universal ribosomal protein uL6 family. As to quaternary structure, part of the 50S ribosomal subunit.

In terms of biological role, this protein binds to the 23S rRNA, and is important in its secondary structure. It is located near the subunit interface in the base of the L7/L12 stalk, and near the tRNA binding site of the peptidyltransferase center. The sequence is that of Large ribosomal subunit protein uL6 from Thermotoga neapolitana (strain ATCC 49049 / DSM 4359 / NBRC 107923 / NS-E).